A 130-amino-acid chain; its full sequence is Phosphoribosyl-AMP cyclohydrolase (130 aa).

Aspartate 77 provides a ligand contact to Mg(2+). Cysteine 78 is a Zn(2+) binding site. Residues aspartate 79 and aspartate 81 each contribute to the Mg(2+) site. Zn(2+)-binding residues include cysteine 95 and cysteine 102.

The protein belongs to the PRA-CH family. Homodimer. Requires Mg(2+) as cofactor. The cofactor is Zn(2+).

The protein localises to the cytoplasm. The enzyme catalyses 1-(5-phospho-beta-D-ribosyl)-5'-AMP + H2O = 1-(5-phospho-beta-D-ribosyl)-5-[(5-phospho-beta-D-ribosylamino)methylideneamino]imidazole-4-carboxamide. The protein operates within amino-acid biosynthesis; L-histidine biosynthesis; L-histidine from 5-phospho-alpha-D-ribose 1-diphosphate: step 3/9. Catalyzes the hydrolysis of the adenine ring of phosphoribosyl-AMP. This is Phosphoribosyl-AMP cyclohydrolase from Pseudomonas savastanoi pv. phaseolicola (strain 1448A / Race 6) (Pseudomonas syringae pv. phaseolicola (strain 1448A / Race 6)).